A 273-amino-acid chain; its full sequence is 4-hydroxy-tetrahydrodipicolinate reductase (273 aa).

NAD(+)-binding positions include 8-13, Asp-35, 103-105, and 129-132; these read GALGRM, GTT, and SQNY. Catalysis depends on His-161, which acts as the Proton donor/acceptor. His-162 is a binding site for (S)-2,3,4,5-tetrahydrodipicolinate. Lys-165 functions as the Proton donor in the catalytic mechanism. Position 171 to 172 (171 to 172) interacts with (S)-2,3,4,5-tetrahydrodipicolinate; the sequence is GT.

It belongs to the DapB family.

The protein resides in the cytoplasm. It catalyses the reaction (S)-2,3,4,5-tetrahydrodipicolinate + NAD(+) + H2O = (2S,4S)-4-hydroxy-2,3,4,5-tetrahydrodipicolinate + NADH + H(+). The catalysed reaction is (S)-2,3,4,5-tetrahydrodipicolinate + NADP(+) + H2O = (2S,4S)-4-hydroxy-2,3,4,5-tetrahydrodipicolinate + NADPH + H(+). The protein operates within amino-acid biosynthesis; L-lysine biosynthesis via DAP pathway; (S)-tetrahydrodipicolinate from L-aspartate: step 4/4. Catalyzes the conversion of 4-hydroxy-tetrahydrodipicolinate (HTPA) to tetrahydrodipicolinate. This is 4-hydroxy-tetrahydrodipicolinate reductase from Methanococcus aeolicus (strain ATCC BAA-1280 / DSM 17508 / OCM 812 / Nankai-3).